The chain runs to 908 residues: Protein translocase subunit SecA (908 aa).

ATP contacts are provided by residues Q87, 105–109 (GEGKT), and D511. Residues 559–570 (ERHESRRIDNQL) are compositionally biased toward basic and acidic residues. Disordered regions lie at residues 559-582 (ERHESRRIDNQLRGRSGRQGDPGS) and 841-908 (RRRR…GRLE). The segment covering 847–856 (LAQQMQRAQA) has biased composition (low complexity). The segment covering 862–873 (TEEDSDAEEQAE) has biased composition (acidic residues). The Zn(2+) site is built by C892, C894, C903, and H904. Positions 898 to 908 (KKYKQCHGRLE) are enriched in basic residues.

The protein belongs to the SecA family. Monomer and homodimer. Part of the essential Sec protein translocation apparatus which comprises SecA, SecYEG and auxiliary proteins SecDF-YajC and YidC. Zn(2+) is required as a cofactor.

The protein resides in the cell inner membrane. It localises to the cytoplasm. It catalyses the reaction ATP + H2O + cellular proteinSide 1 = ADP + phosphate + cellular proteinSide 2.. Part of the Sec protein translocase complex. Interacts with the SecYEG preprotein conducting channel. Has a central role in coupling the hydrolysis of ATP to the transfer of proteins into and across the cell membrane, serving both as a receptor for the preprotein-SecB complex and as an ATP-driven molecular motor driving the stepwise translocation of polypeptide chains across the membrane. This is Protein translocase subunit SecA from Hahella chejuensis (strain KCTC 2396).